The following is a 386-amino-acid chain: Putative membrane-bound transacylase BcsY (386 aa).

10 helical membrane-spanning segments follow: residues 37 to 57 (LAIA…FIGV), 91 to 111 (LLPA…WWVL), 118 to 138 (IALN…SGHV), 156 to 176 (LSLE…LPLT), 181 to 201 (LVLS…WHTG), 237 to 257 (AVYA…PLSY), 258 to 278 (ACPS…IMLP), 290 to 310 (LSPL…GIVV), 322 to 342 (AMMA…YVLV), and 362 to 382 (AALL…ISHV).

The protein belongs to the acyltransferase 3 family.

The protein resides in the cell inner membrane. It functions in the pathway glycan metabolism; bacterial cellulose biosynthesis. In terms of biological role, may acylate a glucose moiety into cellulose fibrils, in cooperation with BcsABII and BcsCII. The sequence is that of Putative membrane-bound transacylase BcsY (bcsY) from Komagataeibacter xylinus (Gluconacetobacter xylinus).